An 87-amino-acid chain; its full sequence is Defensin-like protein 175 (87 aa).

An N-terminal signal peptide occupies residues 1–23 (MAKATSSLVVPIIFLVIFALVEQ). Cystine bridges form between Cys27–Cys66, Cys36–Cys55, Cys39–Cys60, and Cys43–Cys62.

It belongs to the DEFL family.

It is found in the secreted. The sequence is that of Defensin-like protein 175 from Arabidopsis thaliana (Mouse-ear cress).